We begin with the raw amino-acid sequence, 659 residues long: Pseudouridylate synthase 7 homolog (659 aa).

Met-1 carries the post-translational modification N-acetylmethionine. Composition is skewed to polar residues over residues Met-1–Ser-10 and Cys-39–Ser-54. The disordered stretch occupies residues Met-1–Phe-99. Ser-10 bears the Phosphoserine mark. Positions Pro-75 to Ser-98 are enriched in acidic residues. At Ser-125 the chain carries Phosphoserine. The active-site Nucleophile is the Asp-292. Residues Gly-368–Arg-578 form the TRUD domain.

Belongs to the pseudouridine synthase TruD family. Interacts with SIRT1.

It is found in the nucleus. It catalyses the reaction a uridine in tRNA = a pseudouridine in tRNA. The catalysed reaction is uridine(13) in tRNA = pseudouridine(13) in tRNA. It carries out the reaction a uridine in mRNA = a pseudouridine in mRNA. Functionally, pseudouridylate synthase that catalyzes pseudouridylation of RNAs. Acts as a regulator of protein synthesis in embryonic stem cells by mediating pseudouridylation of RNA fragments derived from tRNAs (tRFs): pseudouridylated tRFs inhibit translation by targeting the translation initiation complex. Also catalyzes pseudouridylation of mRNAs: mediates pseudouridylation of mRNAs with the consensus sequence 5'-UGUAG-3'. Acts as a regulator of pre-mRNA splicing by mediating pseudouridylation of pre-mRNAs at locations associated with alternatively spliced regions. Pseudouridylation of pre-mRNAs near splice sites directly regulates mRNA splicing and mRNA 3'-end processing. In addition to mRNAs and tRNAs, binds other types of RNAs, such as snRNAs, Y RNAs and vault RNAs, suggesting that it can catalyze pseudouridylation of many RNA types. This chain is Pseudouridylate synthase 7 homolog, found in Bos taurus (Bovine).